The primary structure comprises 126 residues: Aspartate 1-decarboxylase (126 aa).

The active-site Schiff-base intermediate with substrate; via pyruvic acid is Ser-25. Pyruvic acid (Ser) is present on Ser-25. Thr-57 serves as a coordination point for substrate. Tyr-58 functions as the Proton donor in the catalytic mechanism. 73-75 (GAA) is a substrate binding site.

Belongs to the PanD family. In terms of assembly, heterooctamer of four alpha and four beta subunits. Pyruvate serves as cofactor. Is synthesized initially as an inactive proenzyme, which is activated by self-cleavage at a specific serine bond to produce a beta-subunit with a hydroxyl group at its C-terminus and an alpha-subunit with a pyruvoyl group at its N-terminus.

The protein resides in the cytoplasm. The catalysed reaction is L-aspartate + H(+) = beta-alanine + CO2. It participates in cofactor biosynthesis; (R)-pantothenate biosynthesis; beta-alanine from L-aspartate: step 1/1. In terms of biological role, catalyzes the pyruvoyl-dependent decarboxylation of aspartate to produce beta-alanine. The sequence is that of Aspartate 1-decarboxylase from Citrobacter koseri (strain ATCC BAA-895 / CDC 4225-83 / SGSC4696).